We begin with the raw amino-acid sequence, 885 residues long: DNA mismatch repair protein MutS (885 aa).

Residue 626-633 (GPNMGGKS) participates in ATP binding.

Belongs to the DNA mismatch repair MutS family.

In terms of biological role, this protein is involved in the repair of mismatches in DNA. It is possible that it carries out the mismatch recognition step. This protein has a weak ATPase activity. This is DNA mismatch repair protein MutS from Burkholderia cenocepacia (strain HI2424).